The chain runs to 575 residues: Epsin-1 (575 aa).

Positions 11, 25, 30, 63, and 73 each coordinate a 1,2-diacyl-sn-glycero-3-phospho-(1D-myo-inositol-4,5-bisphosphate). The region spanning 12 to 144 is the ENTH domain; that stretch reads NIVHNYSEAE…RDEDRLREER (133 aa). The disordered stretch occupies residues 150–186; it reads TKEKLAQTATASSAAVGSGPPPEAEQAWPQSSGEEEL. The segment covering 157-167 has biased composition (low complexity); it reads TATASSAAVGS. UIM domains lie at 183–202, 208–227, and 233–252; these read EEELQLQLALAMSKEEADQP, EDDVQLQLALSLSREEHDKE, and GDDLRLQMAIEESKRETGGK. The disordered stretch occupies residues 264–575; it reads FTTPAPPQAS…PAPNTNPFLL (312 aa). 8 tandem repeats follow at residues 274-276, 294-296, 306-308, 319-321, 332-334, 349-351, 367-369, and 377-379. The tract at residues 274–379 is 8 X 3 AA repeats of D-P-W; that stretch reads DPWGGPASVP…APAPAFSDPW (106 aa). Low complexity-rich tracts occupy residues 279 to 299 and 306 to 316; these read PASVPTAVPVAAAASDPWGGP and DPWGGAAPTPA. Low complexity predominate over residues 332 to 346; the sequence is DPWGGTPAPAAGEGP. Over residues 367-379 the composition is skewed to low complexity; sequence DPWAPAPAFSDPW. Ser-382 carries the post-translational modification Phosphoserine. The short motif at 401–410 is the [DE]-X(1,2)-F-X-X-[FL]-X-X-X-R motif element; that stretch reads DEFSDFDRLR. Ser-418 and Ser-419 each carry phosphoserine. Thr-420 is modified (phosphothreonine). Phosphoserine is present on residues Ser-434, Ser-446, and Ser-453. Over residues 453–467 the composition is skewed to pro residues; the sequence is SPPPAATPTPTPPTR. 3 positions are modified to phosphothreonine: Thr-459, Thr-463, and Thr-469. A Phosphoserine modification is found at Ser-472. A Phosphothreonine modification is found at Thr-493. Tandem repeats lie at residues 501–503 and 517–519. The interval 501-573 is 3 X 3 AA repeats of N-P-F; that stretch reads NPFLPSGAPP…GPPAPNTNPF (73 aa). At Arg-533 the chain carries Omega-N-methylarginine. Pro residues predominate over residues 556–569; it reads GLPPMMPPGPPAPN. The stretch at 571-573 is repeat 3; sequence NPF.

Belongs to the epsin family. In terms of assembly, monomer. Binds clathrin and ZBTB16/ZNF145. Binds ubiquitinated proteins. Interacts with RALBP1 in a complex also containing NUMB and TFAP2A during interphase and mitosis. Interacts with AP2B1. Interacts with UBQLN2. Interacts with ITSN1. Interacts with AP2A1 and AP2A2. Interacts with REPS2; the interaction is direct. Interacts with EPS15; the interaction is direct. Interacts with ENTREP1. Phosphorylated on serine and/or threonine residues in mitotic cells. Phosphorylation reduces interaction with REPS2, AP-2 and the membrane fraction. Depolarization of synaptosomes results in dephosphorylation. Post-translationally, ubiquitinated.

The protein localises to the cytoplasm. The protein resides in the cell membrane. Its subcellular location is the nucleus. It is found in the membrane. It localises to the clathrin-coated pit. Functionally, binds to membranes enriched in phosphatidylinositol 4,5-bisphosphate (PtdIns(4,5)P2). Modifies membrane curvature and facilitates the formation of clathrin-coated invaginations. Regulates receptor-mediated endocytosis. The polypeptide is Epsin-1 (Epn1) (Mus musculus (Mouse)).